The sequence spans 39 residues: Cytochrome b6-f complex subunit 5 (39 aa).

The chain crosses the membrane as a helical span at residues 5–25 (LLCGIVLGLVPITLLGLFVSA).

The protein belongs to the PetG family. In terms of assembly, the 4 large subunits of the cytochrome b6-f complex are cytochrome b6, subunit IV (17 kDa polypeptide, PetD), cytochrome f and the Rieske protein, while the 4 small subunits are PetG, PetL, PetM and PetN. The complex functions as a dimer.

It localises to the cellular thylakoid membrane. Component of the cytochrome b6-f complex, which mediates electron transfer between photosystem II (PSII) and photosystem I (PSI), cyclic electron flow around PSI, and state transitions. PetG is required for either the stability or assembly of the cytochrome b6-f complex. The protein is Cytochrome b6-f complex subunit 5 of Prochlorococcus marinus (strain MIT 9515).